A 384-amino-acid polypeptide reads, in one-letter code: Protein RecA (384 aa).

An ATP-binding site is contributed by 76–83; the sequence is GPESSGKT. The tract at residues 346 to 365 is disordered; that stretch reads QGSAEPEKAAKPEKVEKADK. Residues 350–365 show a composition bias toward basic and acidic residues; that stretch reads EPEKAAKPEKVEKADK.

It belongs to the RecA family.

The protein localises to the cytoplasm. Functionally, can catalyze the hydrolysis of ATP in the presence of single-stranded DNA, the ATP-dependent uptake of single-stranded DNA by duplex DNA, and the ATP-dependent hybridization of homologous single-stranded DNAs. It interacts with LexA causing its activation and leading to its autocatalytic cleavage. The chain is Protein RecA from Polaromonas naphthalenivorans (strain CJ2).